An 89-amino-acid chain; its full sequence is Transcription elongation factor 1 homolog (89 aa).

Zn(2+) contacts are provided by Cys25, Cys28, Cys49, and Cys52.

It belongs to the ELOF1 family.

It localises to the nucleus. Its function is as follows. Transcription elongation factor implicated in the maintenance of proper chromatin structure in actively transcribed regions. This is Transcription elongation factor 1 homolog from Oryza sativa subsp. japonica (Rice).